The primary structure comprises 337 residues: Mitochondrial amidoxime-reducing component 1 (337 aa).

G2 carries the N-myristoyl glycine lipid modification. Residues 2–20 (GAAGSSALARFVLLAQSRP) lie on the Mitochondrial matrix side of the membrane. A helical; Signal-anchor for type II membrane protein transmembrane segment spans residues 21–40 (GWLGVAALGLTAVALGAVAW). The Cytoplasmic portion of the chain corresponds to 41–337 (RRAWPTRRRR…VGDPVYLLGQ (297 aa)). Residues K67, S68, and R92 each contribute to the Mo-molybdopterin site. The MOSC N-terminal region stretch occupies residues 93–183 (FWLVINQEGN…KSQPYRLVHF (91 aa)). The 149-residue stretch at 187–335 (MRPRRPHQIA…IKVGDPVYLL (149 aa)) folds into the MOSC domain. Mo-molybdopterin is bound by residues T210, S211, R238, N240, S271, R272, C273, and Y317.

In terms of assembly, component of a complex composed of cytochrome b5, NADH-cytochrome b5 reductase and MTARC1. It depends on Mo-molybdopterin as a cofactor.

It is found in the mitochondrion outer membrane. The protein resides in the membrane. It carries out the reaction N(omega)-hydroxy-L-arginine + 2 Fe(II)-[cytochrome b5] + 2 H(+) = L-arginine + 2 Fe(III)-[cytochrome b5] + H2O. In terms of biological role, catalyzes the reduction of N-oxygenated molecules, acting as a counterpart of cytochrome P450 and flavin-containing monooxygenases in metabolic cycles. As a component of prodrug-converting system, reduces a multitude of N-hydroxylated prodrugs particularly amidoximes, leading to increased drug bioavailability. May be involved in mitochondrial N(omega)-hydroxy-L-arginine (NOHA) reduction, regulating endogenous nitric oxide levels and biosynthesis. Postulated to cleave the N-OH bond of N-hydroxylated substrates in concert with electron transfer from NADH to cytochrome b5 reductase then to cytochrome b5, the ultimate electron donor that primes the active site for substrate reduction. This is Mitochondrial amidoxime-reducing component 1 from Homo sapiens (Human).